A 597-amino-acid chain; its full sequence is DNA mismatch repair protein MutL (597 aa).

Belongs to the DNA mismatch repair MutL/HexB family.

This protein is involved in the repair of mismatches in DNA. It is required for dam-dependent methyl-directed DNA mismatch repair. May act as a 'molecular matchmaker', a protein that promotes the formation of a stable complex between two or more DNA-binding proteins in an ATP-dependent manner without itself being part of a final effector complex. The protein is DNA mismatch repair protein MutL of Rhodopseudomonas palustris (strain HaA2).